Consider the following 217-residue polypeptide: Adenylate kinase (217 aa).

Residue 10-15 coordinates ATP; sequence GAGKGT. An NMP region spans residues 30–59; the sequence is STGDLFRANISQQTELGKLAKSYMNAGNLV. Residues Thr-31, Arg-36, 57–59, 85–88, and Gln-92 each bind AMP; these read NLV and GFPR. The tract at residues 126–164 is LID; that stretch reads GRRVCRNEPKHVFHVTYTPPKKEGVCDVCGGELYQRDDD. ATP is bound by residues Arg-127 and 137 to 138; that span reads VF. Residues Arg-161 and Arg-172 each coordinate AMP. Position 200 (Gly-200) interacts with ATP.

The protein belongs to the adenylate kinase family. Monomer.

The protein resides in the cytoplasm. The catalysed reaction is AMP + ATP = 2 ADP. It participates in purine metabolism; AMP biosynthesis via salvage pathway; AMP from ADP: step 1/1. Its function is as follows. Catalyzes the reversible transfer of the terminal phosphate group between ATP and AMP. Plays an important role in cellular energy homeostasis and in adenine nucleotide metabolism. The sequence is that of Adenylate kinase from Streptomyces coelicolor (strain ATCC BAA-471 / A3(2) / M145).